A 195-amino-acid chain; its full sequence is uncharacterized protein (195 aa).

A run of 2 helical transmembrane segments spans residues 13 to 32 (VIGL…FLVA) and 42 to 64 (LSNS…TILV).

It is found in the cell membrane. This is an uncharacterized protein from Archaeoglobus fulgidus (strain ATCC 49558 / DSM 4304 / JCM 9628 / NBRC 100126 / VC-16).